Consider the following 519-residue polypeptide: Amphoterin-induced protein 2 (519 aa).

The N-terminal stretch at methionine 1 to glycine 38 is a signal peptide. The LRRNT domain occupies methionine 39–arginine 67. At methionine 39–threonine 397 the chain is on the extracellular side. Disulfide bonds link cysteine 40-cysteine 46 and cysteine 44-cysteine 53. The N-linked (GlcNAc...) asparagine glycan is linked to asparagine 57. LRR repeat units follow at residues leucine 68 to valine 89, lysine 93 to threonine 114, asparagine 117 to glutamate 138, alanine 141 to glycine 162, histidine 165 to glycine 186, and aspartate 192 to leucine 213. Asparagine 103 carries an N-linked (GlcNAc...) asparagine glycan. One can recognise an LRRCT domain in the interval asparagine 227–tyrosine 283. 2 cysteine pairs are disulfide-bonded: cysteine 231/cysteine 259 and cysteine 233/cysteine 281. 7 N-linked (GlcNAc...) asparagine glycosylation sites follow: asparagine 280, asparagine 287, asparagine 344, asparagine 372, asparagine 380, asparagine 383, and asparagine 387. The Ig-like C2-type domain maps to glycine 288 to methionine 378. Residues cysteine 309 and cysteine 362 are joined by a disulfide bond. Residues alanine 398–leucine 418 traverse the membrane as a helical segment. The Cytoplasmic segment spans residues threonine 419–threonine 519. Residues arginine 498–threonine 519 form a disordered region.

Belongs to the immunoglobulin superfamily. AMIGO family. In terms of assembly, binds itself as well as AMIGO1 and AMIGO3. In terms of tissue distribution, highest level in cerebellum, retina, liver, and lung. Lower levels in cerebrum, kidney, small intestine, spleen and testis.

The protein localises to the cell membrane. Its subcellular location is the nucleus. In terms of biological role, required for depolarization-dependent survival of cultured cerebellar granule neurons. May mediate homophilic as well as heterophilic cell-cell interaction with AMIGO1 or AMIGO3. May contribute to signal transduction through its intracellular domain. The protein is Amphoterin-induced protein 2 of Mus musculus (Mouse).